The chain runs to 594 residues: Frizzled and smoothened-like protein A (594 aa).

The N-terminal stretch at 1–22 is a signal peptide; that stretch reads MVDIRKSLFFIIFFIFYNYVNS. At 23-248 the chain is on the extracellular side; that stretch reads QKAINSDAFC…NEWYQFKDLT (226 aa). One can recognise an FZ domain in the interval 27–173; sequence NSDAFCQKKT…SNYDLQCLNI (147 aa). 2 disulfides stabilise this stretch: cysteine 32–cysteine 98 and cysteine 41–cysteine 91. N-linked (GlcNAc...) asparagine glycosylation is found at asparagine 55 and asparagine 106. Cysteine 117 and cysteine 170 are oxidised to a cystine. Residues asparagine 182, asparagine 189, asparagine 195, and asparagine 206 are each glycosylated (N-linked (GlcNAc...) asparagine). A helical transmembrane segment spans residues 249 to 269; it reads TVTGVISFVCIFFNIFIYGFL. Topologically, residues 270–277 are cytoplasmic; it reads NKKHDRHT. The helical transmembrane segment at 278-298 threads the bilayer; the sequence is IGILCLSFSLWCCMLSDLIVA. The Extracellular portion of the chain corresponds to 299–329; sequence SSPDYSLVCPEPGRFARIHDSRCVANGIIFQ. A helical membrane pass occupies residues 330–350; sequence WGAVCTTMFWSAMAIDLYLVI. The Cytoplasmic portion of the chain corresponds to 351-361; that stretch reads KKLSLPAFTVK. Residues 362 to 382 form a helical membrane-spanning segment; the sequence is YFVAAIFTLALLFTTVPLAWD. Residues 383-403 lie on the Extracellular side of the membrane; sequence DYGYGFGGVGCWIMSNSVQNG. Residues 404-424 traverse the membrane as a helical segment; it reads CFWIPMLICLLIGAVSICLII. Residues 425 to 448 lie on the Cytoplasmic side of the membrane; it reads YEIVKVFKNVGRSGISIILANARL. A helical membrane pass occupies residues 449 to 469; the sequence is FGIVSFIFIEYIYLFVYHFWV. Residues 470-507 are Extracellular-facing; it reads QENTEKFTQNITDWVICVQTTGSSDGCPLPKAVPYATQ. Asparagine 479 carries N-linked (GlcNAc...) asparagine glycosylation. The helical transmembrane segment at 508-528 threads the bilayer; sequence FIFLFFLRLLGIEVCIFYGIN. At 529–594 the chain is on the cytoplasmic side; that stretch reads SRSKNIILES…SKNGGDDDDL (66 aa).

This sequence belongs to the G-protein coupled receptor Fz/Smo family.

It is found in the membrane. This Dictyostelium discoideum (Social amoeba) protein is Frizzled and smoothened-like protein A (fslA).